We begin with the raw amino-acid sequence, 144 residues long: Ribosome maturation factor RimP (144 aa).

This sequence belongs to the RimP family.

It localises to the cytoplasm. Functionally, required for maturation of 30S ribosomal subunits. This is Ribosome maturation factor RimP from Methylobacillus flagellatus (strain ATCC 51484 / DSM 6875 / VKM B-1610 / KT).